The primary structure comprises 60 residues: Small, acid-soluble spore protein H (60 aa).

It belongs to the SspH family.

It localises to the spore core. The polypeptide is Small, acid-soluble spore protein H (Halalkalibacterium halodurans (strain ATCC BAA-125 / DSM 18197 / FERM 7344 / JCM 9153 / C-125) (Bacillus halodurans)).